The chain runs to 95 residues: UPF0381 protein HI_0400 (95 aa).

This sequence belongs to the UPF0381 family.

In Haemophilus influenzae (strain ATCC 51907 / DSM 11121 / KW20 / Rd), this protein is UPF0381 protein HI_0400.